Consider the following 477-residue polypeptide: Aspartyl/glutamyl-tRNA(Asn/Gln) amidotransferase subunit B (477 aa).

The protein belongs to the GatB/GatE family. GatB subfamily. In terms of assembly, heterotrimer of A, B and C subunits.

It catalyses the reaction L-glutamyl-tRNA(Gln) + L-glutamine + ATP + H2O = L-glutaminyl-tRNA(Gln) + L-glutamate + ADP + phosphate + H(+). The enzyme catalyses L-aspartyl-tRNA(Asn) + L-glutamine + ATP + H2O = L-asparaginyl-tRNA(Asn) + L-glutamate + ADP + phosphate + 2 H(+). Its function is as follows. Allows the formation of correctly charged Asn-tRNA(Asn) or Gln-tRNA(Gln) through the transamidation of misacylated Asp-tRNA(Asn) or Glu-tRNA(Gln) in organisms which lack either or both of asparaginyl-tRNA or glutaminyl-tRNA synthetases. The reaction takes place in the presence of glutamine and ATP through an activated phospho-Asp-tRNA(Asn) or phospho-Glu-tRNA(Gln). In Coxiella burnetii (strain RSA 493 / Nine Mile phase I), this protein is Aspartyl/glutamyl-tRNA(Asn/Gln) amidotransferase subunit B.